A 310-amino-acid chain; its full sequence is Methionyl-tRNA formyltransferase (310 aa).

111 to 114 contacts (6S)-5,6,7,8-tetrahydrofolate; that stretch reads SLLP.

The protein belongs to the Fmt family.

The catalysed reaction is L-methionyl-tRNA(fMet) + (6R)-10-formyltetrahydrofolate = N-formyl-L-methionyl-tRNA(fMet) + (6S)-5,6,7,8-tetrahydrofolate + H(+). Its function is as follows. Attaches a formyl group to the free amino group of methionyl-tRNA(fMet). The formyl group appears to play a dual role in the initiator identity of N-formylmethionyl-tRNA by promoting its recognition by IF2 and preventing the misappropriation of this tRNA by the elongation apparatus. In Afipia carboxidovorans (strain ATCC 49405 / DSM 1227 / KCTC 32145 / OM5) (Oligotropha carboxidovorans), this protein is Methionyl-tRNA formyltransferase.